The chain runs to 223 residues: Interleukin-12 subunit alpha (223 aa).

An N-terminal signal peptide occupies residues 1 to 23 (MCPSARSLLLLASLVLLEHLGSA). 4 N-linked (GlcNAc...) asparagine glycosylation sites follow: asparagine 41, asparagine 79, asparagine 121, and asparagine 176. 2 cysteine pairs are disulfide-bonded: cysteine 66-cysteine 200 and cysteine 87-cysteine 125.

It belongs to the IL-6 superfamily. Heterodimer with IL12B; disulfide-linked. This heterodimer is known as interleukin IL-12. Heterodimer with EBI3/IL27B; not disulfide-linked. This heterodimer is known as interleukin IL-35. Interacts with NBR1; this interaction promotes IL-12 secretion.

Its subcellular location is the secreted. Its function is as follows. Heterodimerizes with IL12B to form the IL-12 cytokine or with EBI3/IL27B to form the IL-35 cytokine. IL-12 is primarily produced by professional antigen-presenting cells (APCs) such as B-cells and dendritic cells (DCs) as well as macrophages and granulocytes and regulates T-cell and natural killer-cell responses, induces the production of interferon-gamma (IFN-gamma), favors the differentiation of T-helper 1 (Th1) cells and is an important link between innate resistance and adaptive immunity. Mechanistically, exerts its biological effects through a receptor composed of IL12R1 and IL12R2 subunits. Binding to the receptor results in the rapid tyrosine phosphorylation of a number of cellular substrates including the JAK family kinases TYK2 and JAK2. In turn, recruited STAT4 gets phosphorylated and translocates to the nucleus where it regulates cytokine/growth factor responsive genes. As part of IL-35, plays essential roles in maintaining the immune homeostasis of the liver microenvironment and also functions as an immune-suppressive cytokine. Mediates biological events through unconventional receptors composed of IL12RB2 and gp130/IL6ST heterodimers or homodimers. Signaling requires the transcription factors STAT1 and STAT4, which form a unique heterodimer that binds to distinct DNA sites. In Marmota monax (Woodchuck), this protein is Interleukin-12 subunit alpha (IL12A).